Here is a 124-residue protein sequence, read N- to C-terminus: Small ribosomal subunit protein uS12 (124 aa).

At aspartate 89 the chain carries 3-methylthioaspartic acid. The tract at residues 102–124 (LDTSGVNNRKHGRSKYGTKRPKS) is disordered. Basic residues predominate over residues 109–124 (NRKHGRSKYGTKRPKS).

Belongs to the universal ribosomal protein uS12 family. As to quaternary structure, part of the 30S ribosomal subunit. Contacts proteins S8 and S17. May interact with IF1 in the 30S initiation complex.

Functionally, with S4 and S5 plays an important role in translational accuracy. In terms of biological role, interacts with and stabilizes bases of the 16S rRNA that are involved in tRNA selection in the A site and with the mRNA backbone. Located at the interface of the 30S and 50S subunits, it traverses the body of the 30S subunit contacting proteins on the other side and probably holding the rRNA structure together. The combined cluster of proteins S8, S12 and S17 appears to hold together the shoulder and platform of the 30S subunit. This Francisella tularensis subsp. tularensis (strain FSC 198) protein is Small ribosomal subunit protein uS12.